The primary structure comprises 971 residues: Exportin-2 (971 aa).

The region spanning 29–102 is the Importin N-terminal domain; the sequence is AEKYLESVEG…KSSIINLMLR (74 aa).

This sequence belongs to the XPO2/CSE1 family.

The protein localises to the cytoplasm. It is found in the nucleus. Export receptor for importin alpha. Mediates importin-alpha re-export from the nucleus to the cytoplasm after import substrates have been released into the nucleoplasm. This chain is Exportin-2 (cse1l), found in Xenopus laevis (African clawed frog).